Here is a 1045-residue protein sequence, read N- to C-terminus: Fibrosin-1-like protein (1045 aa).

Positions 1-12 (MEAKVRPSRRSR) are enriched in basic residues. Disordered regions lie at residues 1–86 (MEAK…DGFA) and 99–315 (DMAL…THVP). A compositionally biased stretch (basic and acidic residues) spans 13-28 (AQRDRGRRREAARDAR). The segment covering 48-63 (GLRGAPPRGAAPAPRT) has biased composition (low complexity). A compositionally biased stretch (basic and acidic residues) spans 99–123 (DMALKPHERKEKWERRLIKKPRESE). A compositionally biased stretch (polar residues) spans 183-197 (EATSSRDPLSDSSAH). Over residues 270–280 (HAAPCPGPPPG) the composition is skewed to pro residues. S340 carries the post-translational modification Phosphoserine. Basic residues predominate over residues 443-457 (QHTHQHTHQHTHQHQ). Disordered regions lie at residues 443–462 (QHTH…TFAP) and 719–753 (EGSS…PKSV). Positions 741–750 (PSFPAPPPWP) are enriched in pro residues. S790 bears the Phosphoserine mark. Disordered regions lie at residues 809-880 (ELGR…APLQ) and 910-961 (AAAP…PALD). The segment covering 817 to 837 (AEREAEPRVKESRSPAKEEAA) has biased composition (basic and acidic residues). K858 participates in a covalent cross-link: Glycyl lysine isopeptide (Lys-Gly) (interchain with G-Cter in SUMO2). Low complexity predominate over residues 910–922 (AAAPAPGSAALLE). Basic and acidic residues predominate over residues 923 to 949 (PPERPYRDREPHGYSPERLRGELERAR). Phosphoserine occurs at positions 937 and 977. Phosphothreonine occurs at positions 989 and 1010. The segment at 991–1045 (PAAAALGAPPPLVTAAGPPTPPGPPRSRTTPLGGLGPGEARDYSPSRNPPEVEAR) is disordered. Residues 998-1015 (APPPLVTAAGPPTPPGPP) are compositionally biased toward pro residues. The segment covering 1029 to 1045 (EARDYSPSRNPPEVEAR) has biased composition (basic and acidic residues).

The protein belongs to the AUTS2 family.

The protein is Fibrosin-1-like protein (FBRSL1) of Homo sapiens (Human).